We begin with the raw amino-acid sequence, 89 residues long: Small ribosomal subunit protein uS15 (89 aa).

Belongs to the universal ribosomal protein uS15 family. As to quaternary structure, part of the 30S ribosomal subunit. Forms a bridge to the 50S subunit in the 70S ribosome, contacting the 23S rRNA.

Functionally, one of the primary rRNA binding proteins, it binds directly to 16S rRNA where it helps nucleate assembly of the platform of the 30S subunit by binding and bridging several RNA helices of the 16S rRNA. Its function is as follows. Forms an intersubunit bridge (bridge B4) with the 23S rRNA of the 50S subunit in the ribosome. This chain is Small ribosomal subunit protein uS15, found in Photobacterium profundum (strain SS9).